Reading from the N-terminus, the 637-residue chain is Nuclear receptor subfamily 2 group C member 1-B (637 aa).

Residues 149–224 (VELCVVCGDK…LGMKQDSVQC (76 aa)) constitute a DNA-binding region (nuclear receptor). NR C4-type zinc fingers lie at residues 152 to 172 (CVVC…CEGC) and 188 to 207 (CRGS…CQYC). An NR LBD domain is found at 383–624 (CVGSGSNLLP…SIIPYILRME (242 aa)).

It belongs to the nuclear hormone receptor family. NR2 subfamily.

Its subcellular location is the nucleus. In terms of biological role, orphan nuclear receptor. Binds the IR7 element in the promoter of its own gene in an autoregulatory negative feedback mechanism. Primarily repressor of a broad range of genes. Binds to hormone response elements (HREs) consisting of two 5'-AGGTCA-3' half site direct repeat consensus sequences. The sequence is that of Nuclear receptor subfamily 2 group C member 1-B (nr2c1-b) from Xenopus laevis (African clawed frog).